Consider the following 836-residue polypeptide: Hypoxia-inducible factor 1-alpha (836 aa).

The disordered stretch occupies residues 1–30 (MEGAGGENEKKKMSSERRKEKSRDAARSRR). Positions 1 to 401 (MEGAGGENEK…KEPDALTLLA (401 aa)) are interaction with TSGA10. Residues 7–30 (ENEKKKMSSERRKEKSRDAARSRR) are compositionally biased toward basic and acidic residues. The bHLH domain maps to 17–70 (RRKEKSRDAARSRRSKESEVFYELAHQLPLPHNVSSHLDKASVMRLTISYLRVR). A DNA-binding region spans residues 21 to 30 (KSRDAARSRR). Residues 80 to 155 (SEDEMKAQMD…EMLTHRNGPV (76 aa)) enclose the PAS 1 domain. A required for heterodimer formation with ARNT region spans residues 170–191 (RMKCTLTSRGRTMNIKSATWKV). One can recognise a PAS 2 domain in the interval 228-298 (PHPSNIEIPL…KTHHDMFTKG (71 aa)). The residue at position 247 (Ser247) is a Phosphoserine; by CK1. The PAC domain maps to 302–345 (TGQYRMLAKRGGYVWVETQATVIYNTKNSQPQCIVCVNYVVSGI). Residues 380–417 (SEDTSCLFDKLKKEPDALTLLAPAAGDTIISLDFGSDD) form an N-terminal VHL recognition site region. Lys391 is covalently cross-linked (Glycyl lysine isopeptide (Lys-Gly) (interchain with G-Cter in SUMO)). Positions 401–613 (APAAGDTIIS…PSMSTVTGFQ (213 aa)) are ODD. Pro402 is subject to 4-hydroxyproline. Lys476 participates in a covalent cross-link: Glycyl lysine isopeptide (Lys-Gly) (interchain with G-Cter in SUMO). A disordered region spans residues 492-511 (QIQDQPASPSDGSTRQSSPE). Residues 544–588 (FKLELVEKLFAEDTEAKNPFSTQDTDLDLEMLAPYIPMDDDFQLR) are NTAD. The residue at position 545 (Lys545) is an N6-acetyllysine; alternate. Residues Lys545, Lys551, and Lys560 each participate in a glycyl lysine isopeptide (Lys-Gly) (interchain with G-Cter in ubiquitin) cross-link. Lys545 participates in a covalent cross-link: Glycyl lysine isopeptide (Lys-Gly) (interchain with G-Cter in ubiquitin); alternate. The residue at position 564 (Ser564) is a Phosphoserine; by GSK3-beta. A Phosphothreonine; by GSK3-beta modification is found at Thr568. The interval 569 to 585 (DLDLEMLAPYIPMDDDF) is C-terminal VHL recognition site. Pro577 carries the post-translational modification 4-hydroxyproline. Residue Ser589 is modified to Phosphoserine; by PLK3. Positions 589 to 795 (SFDQLSPLES…SDLACRLLGQ (207 aa)) are ID. Disordered regions lie at residues 593–684 (LSPL…DRAG) and 707–734 (QRNT…KMEH). Ser602 is subject to Phosphoserine; by GSK3-beta. Residues 608-620 (TVTGFQQTQLQKP) are compositionally biased toward polar residues. Positions 621 to 632 (TITATATTTATT) are enriched in low complexity. Residues 633 to 647 (DESKTETKDNKEDIK) show a composition bias toward basic and acidic residues. Polar residues predominate over residues 652–678 (SPSSTQVPQETTTAKASAYSGTHSRTA). Ser668 carries the post-translational modification Phosphoserine; by PLK3. The residue at position 719 (Lys719) is an N6-acetyllysine. A Nuclear localization signal motif is present at residues 728 to 731 (RKRK). The interval 796-836 (SMDESGLPQLTSYDCEVNAPIQGSRNLLQGEELLRALDQVN) is CTAD. Position 810 is an S-nitrosocysteine (Cys810). Residue Asn813 is modified to (3S)-3-hydroxyasparagine.

As to quaternary structure, interacts with the ARNT; forms a heterodimer that binds core DNA sequence 5'-TACGTG-3' within the hypoxia response element (HRE) of target gene promoters. Interacts with COPS5; the interaction increases the transcriptional activity of HIF1A through increased stability. Interacts with EP300 (via TAZ-type 1 domains); the interaction is stimulated in response to hypoxia and inhibited by CITED2. Interacts with CREBBP (via TAZ-type 1 domains). Interacts with NCOA1, NCOA2, APEX1 and HSP90. Interacts (hydroxylated within the ODD domain) with VHLL (via beta domain); the interaction, leads to polyubiquitination and subsequent HIF1A proteasomal degradation. During hypoxia, sumoylated HIF1A also binds VHL; the interaction promotes the ubiquitination of HIF1A. Interacts with SENP1; the interaction desumoylates HIF1A resulting in stabilization and activation of transcription. Interacts (via the ODD domain) with NAA10; the interaction appears not to acetylate HIF1A nor have any affect on protein stability, during hypoxia. Interacts with RWDD3; the interaction enhances HIF1A sumoylation. Interacts with TSGA10. Interacts with HIF3A. Interacts with RORA (via the DNA binding domain); the interaction enhances HIF1A transcription under hypoxia through increasing protein stability. Interaction with PSMA7 inhibits the transactivation activity of HIF1A under both normoxic and hypoxia-mimicking conditions. Interacts with USP20. Interacts with RACK1; promotes HIF1A ubiquitination and proteasome-mediated degradation. Interacts (via N-terminus) with USP19. Interacts with SIRT2. Interacts (deacetylated form) with EGLN1. Interacts with CBFA2T3. Interacts with HSP90AA1 and HSP90AB1. Interacts with DCUN1D1; this interaction increases the interaction between VHL and DCUN1D1. Interacts with HIF1AN. In terms of processing, S-nitrosylation of Cys-810 may be responsible for increased recruitment of p300 coactivator necessary for transcriptional activity of HIF-1 complex. Requires phosphorylation for DNA-binding. Phosphorylation at Ser-247 by CSNK1D/CK1 represses kinase activity and impairs ARNT binding. Phosphorylation by GSK3-beta and PLK3 promote degradation by the proteasome. Post-translationally, sumoylated; with SUMO1 under hypoxia. Sumoylation is enhanced through interaction with RWDD3. Both sumoylation and desumoylation seem to be involved in the regulation of its stability during hypoxia. Sumoylation can promote either its stabilization or its VHL-dependent degradation by promoting hydroxyproline-independent HIF1A-VHL complex binding, thus leading to HIF1A ubiquitination and proteasomal degradation. Desumoylation by SENP1 increases its stability amd transcriptional activity. There is a disaccord between various publications on the effect of sumoylation and desumoylation on its stability and transcriptional activity. In terms of processing, acetylation of Lys-545 by ARD1 increases interaction with VHL and stimulates subsequent proteasomal degradation. Deacetylation of Lys-719 by SIRT2 increases its interaction with and hydroxylation by EGLN1 thereby inactivating HIF1A activity by inducing its proteasomal degradation. Ubiquitinated; in normoxia, following hydroxylation and interaction with VHL. Lys-545 appears to be the principal site of ubiquitination. Clioquinol, the Cu/Zn-chelator, inhibits ubiquitination through preventing hydroxylation at Asn-813. Ubiquitinated by E3 ligase VHL. Deubiquitinated by UCHL1. Post-translationally, the iron and 2-oxoglutarate dependent 3-hydroxylation of asparagine is (S) stereospecific within HIF CTAD domains. In terms of processing, in normoxia, is hydroxylated on Pro-402 and Pro-577 in the oxygen-dependent degradation domain (ODD) by EGLN1/PHD2 and EGLN2/PHD1. EGLN3/PHD3 has also been shown to hydroxylate Pro-577. The hydroxylated prolines promote interaction with VHL, initiating rapid ubiquitination and subsequent proteasomal degradation. Deubiquitinated by USP20. Under hypoxia, proline hydroxylation is impaired and ubiquitination is attenuated, resulting in stabilization. In normoxia, is hydroxylated on Asn-813 by HIF1AN, thus abrogating interaction with CREBBP and EP300 and preventing transcriptional activation. Repressed by iron ion, via Fe(2+) prolyl hydroxylase (PHD) enzymes-mediated hydroxylation and subsequent proteasomal degradation. Ubiquitous.

The protein resides in the cytoplasm. The protein localises to the nucleus. It is found in the nucleus speckle. With respect to regulation, induced by reactive oxygen species (ROS). Functions as a master transcriptional regulator of the adaptive response to hypoxia. Under hypoxic conditions, activates the transcription of over 40 genes, including erythropoietin, glucose transporters, glycolytic enzymes, vascular endothelial growth factor, HILPDA, and other genes whose protein products increase oxygen delivery or facilitate metabolic adaptation to hypoxia. Plays an essential role in embryonic vascularization, tumor angiogenesis and pathophysiology of ischemic disease. Heterodimerizes with ARNT; heterodimer binds to core DNA sequence 5'-TACGTG-3' within the hypoxia response element (HRE) of target gene promoters. Activation requires recruitment of transcriptional coactivators such as CREBBP and EP300. Activity is enhanced by interaction with NCOA1 and/or NCOA2. Interaction with redox regulatory protein APEX1 seems to activate CTAD and potentiates activation by NCOA1 and CREBBP. Involved in the axonal distribution and transport of mitochondria in neurons during hypoxia. This Mus musculus (Mouse) protein is Hypoxia-inducible factor 1-alpha (Hif1a).